The sequence spans 331 residues: Anthranilate phosphoribosyltransferase (331 aa).

Residues G81, 84–85 (GD), S89, 91–94 (NCST), 109–117 (KHGNRAVSS), and S121 each bind 5-phospho-alpha-D-ribose 1-diphosphate. G81 contacts anthranilate. S93 serves as a coordination point for Mg(2+). N112 contributes to the anthranilate binding site. Residue R167 coordinates anthranilate. 2 residues coordinate Mg(2+): D226 and E227.

It belongs to the anthranilate phosphoribosyltransferase family. Homodimer. Mg(2+) is required as a cofactor.

The catalysed reaction is N-(5-phospho-beta-D-ribosyl)anthranilate + diphosphate = 5-phospho-alpha-D-ribose 1-diphosphate + anthranilate. Its pathway is amino-acid biosynthesis; L-tryptophan biosynthesis; L-tryptophan from chorismate: step 2/5. Catalyzes the transfer of the phosphoribosyl group of 5-phosphorylribose-1-pyrophosphate (PRPP) to anthranilate to yield N-(5'-phosphoribosyl)-anthranilate (PRA). This Oleidesulfovibrio alaskensis (strain ATCC BAA-1058 / DSM 17464 / G20) (Desulfovibrio alaskensis) protein is Anthranilate phosphoribosyltransferase.